The chain runs to 155 residues: Putative pre-16S rRNA nuclease (155 aa).

It belongs to the YqgF nuclease family.

Its subcellular location is the cytoplasm. In terms of biological role, could be a nuclease involved in processing of the 5'-end of pre-16S rRNA. The sequence is that of Putative pre-16S rRNA nuclease from Xanthomonas euvesicatoria pv. vesicatoria (strain 85-10) (Xanthomonas campestris pv. vesicatoria).